A 733-amino-acid chain; its full sequence is tRNA (guanine(27)-N(2))-dimethyltransferase (733 aa).

Residues 1-18 (MENMAEEELLPLEKEEVE) show a composition bias toward acidic residues. The disordered stretch occupies residues 1–78 (MENMAEEELL…LASAPEEAKS (78 aa)). T26 is subject to Phosphothreonine. 2 stretches are compositionally biased toward low complexity: residues 39 to 49 (PDSALDSAPTP) and 57 to 73 (PALA…ASAP). Position 66 is a phosphoserine (S66). A Nucleolar localization signal motif is present at residues 135–139 (HKLRR). The C2H2-type zinc-finger motif lies at 184–206 (YHCIICSATITRRTDMLGHVRRH). In terms of domain architecture, Trm1 methyltransferase spans 227-688 (EILKEADTDV…APLMQFKSIL (462 aa)). The S-adenosyl-L-methionine site is built by R260, D307, D357, and A358. C488, C491, C513, and C515 together coordinate Zn(2+). K585 is covalently cross-linked (Glycyl lysine isopeptide (Lys-Gly) (interchain with G-Cter in SUMO2)). 2 positions are modified to phosphoserine: S612 and S707.

The protein belongs to the class I-like SAM-binding methyltransferase superfamily. Trm1 family. Widely expressed.

It localises to the nucleus. It is found in the nucleolus. It catalyses the reaction guanosine(27) in tRNA(Tyr) + 2 S-adenosyl-L-methionine = N(2)-dimethylguanosine(27) in tRNA(Tyr) + 2 S-adenosyl-L-homocysteine + 2 H(+). Functionally, specifically dimethylates a single guanine residue at position 27 of tRNA(Tyr) using S-adenosyl-L-methionine as donor of the methyl groups. Dimethylation at position 27 of tRNA(Tyr) is required for efficient translation of tyrosine codons. Also required to maintain 3-(3-amino-3-carboxypropyl)uridine (acp3U) in the D-loop of several cytoplasmic tRNAs. The sequence is that of tRNA (guanine(27)-N(2))-dimethyltransferase from Homo sapiens (Human).